Reading from the N-terminus, the 104-residue chain is Large ribosomal subunit protein uL24 (104 aa).

Belongs to the universal ribosomal protein uL24 family. As to quaternary structure, part of the 50S ribosomal subunit.

Its function is as follows. One of two assembly initiator proteins, it binds directly to the 5'-end of the 23S rRNA, where it nucleates assembly of the 50S subunit. In terms of biological role, one of the proteins that surrounds the polypeptide exit tunnel on the outside of the subunit. This Shewanella amazonensis (strain ATCC BAA-1098 / SB2B) protein is Large ribosomal subunit protein uL24.